Reading from the N-terminus, the 201-residue chain is Small ribosomal subunit protein uS4 (201 aa).

A disordered region spans residues 1-42 (MARYTGPVTRKSRRLGTDLVGGDQSFEKRPYPPGQHGRARIK). The 67-residue stretch at 91–157 (SRLDNVVYRA…VPFQIARETA (67 aa)) folds into the S4 RNA-binding domain.

Belongs to the universal ribosomal protein uS4 family. In terms of assembly, part of the 30S ribosomal subunit. Contacts protein S5. The interaction surface between S4 and S5 is involved in control of translational fidelity.

In terms of biological role, one of the primary rRNA binding proteins, it binds directly to 16S rRNA where it nucleates assembly of the body of the 30S subunit. Functionally, with S5 and S12 plays an important role in translational accuracy. The polypeptide is Small ribosomal subunit protein uS4 (Mycobacterium marinum (strain ATCC BAA-535 / M)).